Reading from the N-terminus, the 320-residue chain is Ferrochelatase (320 aa).

Fe cation-binding residues include His194 and Glu275.

The protein belongs to the ferrochelatase family. Monomer.

Its subcellular location is the cytoplasm. The enzyme catalyses heme b + 2 H(+) = protoporphyrin IX + Fe(2+). It participates in porphyrin-containing compound metabolism; protoheme biosynthesis; protoheme from protoporphyrin-IX: step 1/1. Functionally, catalyzes the ferrous insertion into protoporphyrin IX. The polypeptide is Ferrochelatase (Escherichia coli O157:H7 (strain EC4115 / EHEC)).